Consider the following 743-residue polypeptide: Phosphoribosylformylglycinamidine synthase subunit PurL (743 aa).

Residue H54 is part of the active site. Positions 57 and 96 each coordinate ATP. A Mg(2+)-binding site is contributed by E98. Substrate-binding positions include S99 to H102 and R121. The active-site Proton acceptor is the H100. A Mg(2+)-binding site is contributed by D122. Q245 is a binding site for substrate. A Mg(2+)-binding site is contributed by D273. A substrate-binding site is contributed by E317–Q319. Residues D501 and G538 each contribute to the ATP site. N539 is a Mg(2+) binding site. A substrate-binding site is contributed by S541.

Belongs to the FGAMS family. In terms of assembly, monomer. Part of the FGAM synthase complex composed of 1 PurL, 1 PurQ and 2 PurS subunits.

It localises to the cytoplasm. The catalysed reaction is N(2)-formyl-N(1)-(5-phospho-beta-D-ribosyl)glycinamide + L-glutamine + ATP + H2O = 2-formamido-N(1)-(5-O-phospho-beta-D-ribosyl)acetamidine + L-glutamate + ADP + phosphate + H(+). The protein operates within purine metabolism; IMP biosynthesis via de novo pathway; 5-amino-1-(5-phospho-D-ribosyl)imidazole from N(2)-formyl-N(1)-(5-phospho-D-ribosyl)glycinamide: step 1/2. Functionally, part of the phosphoribosylformylglycinamidine synthase complex involved in the purines biosynthetic pathway. Catalyzes the ATP-dependent conversion of formylglycinamide ribonucleotide (FGAR) and glutamine to yield formylglycinamidine ribonucleotide (FGAM) and glutamate. The FGAM synthase complex is composed of three subunits. PurQ produces an ammonia molecule by converting glutamine to glutamate. PurL transfers the ammonia molecule to FGAR to form FGAM in an ATP-dependent manner. PurS interacts with PurQ and PurL and is thought to assist in the transfer of the ammonia molecule from PurQ to PurL. This chain is Phosphoribosylformylglycinamidine synthase subunit PurL, found in Halalkalibacterium halodurans (strain ATCC BAA-125 / DSM 18197 / FERM 7344 / JCM 9153 / C-125) (Bacillus halodurans).